We begin with the raw amino-acid sequence, 92 residues long: MPRSLKKGPFIDLHLLKKVEKAMEAGDKKPIKTWSRRSMIIPNMIGLTIAVHNGRQHVPVFVTDEMIGHKLGEFSPTRTYRGHAADKKAKKR.

The protein belongs to the universal ribosomal protein uS19 family.

Its function is as follows. Protein S19 forms a complex with S13 that binds strongly to the 16S ribosomal RNA. The polypeptide is Small ribosomal subunit protein uS19 (Shewanella putrefaciens (strain CN-32 / ATCC BAA-453)).